The sequence spans 445 residues: Ribosomal protein uS12 methylthiotransferase RimO (445 aa).

The 116-residue stretch at I4–K119 folds into the MTTase N-terminal domain. C13, C48, C82, C156, C160, and C163 together coordinate [4Fe-4S] cluster. The region spanning T142–D372 is the Radical SAM core domain. Residues K375–N441 form the TRAM domain.

This sequence belongs to the methylthiotransferase family. RimO subfamily. The cofactor is [4Fe-4S] cluster.

The protein localises to the cytoplasm. The catalysed reaction is L-aspartate(89)-[ribosomal protein uS12]-hydrogen + (sulfur carrier)-SH + AH2 + 2 S-adenosyl-L-methionine = 3-methylsulfanyl-L-aspartate(89)-[ribosomal protein uS12]-hydrogen + (sulfur carrier)-H + 5'-deoxyadenosine + L-methionine + A + S-adenosyl-L-homocysteine + 2 H(+). Functionally, catalyzes the methylthiolation of an aspartic acid residue of ribosomal protein uS12. In Clostridium botulinum (strain Loch Maree / Type A3), this protein is Ribosomal protein uS12 methylthiotransferase RimO.